A 333-amino-acid polypeptide reads, in one-letter code: Global transcription regulator sge1 (333 aa).

2 disordered regions span residues 93–139 (PPGE…PSVP) and 241–307 (QHQS…PQYQ).

The protein belongs to the MIT1/WOR1 family.

Its subcellular location is the nucleus. Global transcriptional regulator that acts as an activator of secondary metabolism. Required for expression of a yet uncharacterized secondary metabolism gene cluster containing a non-canonical non-ribosomal peptide synthetase. Not required for conidiogenesis nor for pathogenicity, but is involved in vegetative growth. This is Global transcription regulator sge1 from Gibberella fujikuroi (strain CBS 195.34 / IMI 58289 / NRRL A-6831) (Bakanae and foot rot disease fungus).